Here is a 644-residue protein sequence, read N- to C-terminus: Biosynthetic arginine decarboxylase (644 aa).

Lysine 105 carries the post-translational modification N6-(pyridoxal phosphate)lysine. 287 to 297 (LDVGGGLGIDY) contributes to the substrate binding site.

This sequence belongs to the Orn/Lys/Arg decarboxylase class-II family. SpeA subfamily. Requires Mg(2+) as cofactor. Pyridoxal 5'-phosphate serves as cofactor.

The catalysed reaction is L-arginine + H(+) = agmatine + CO2. Its function is as follows. Catalyzes the biosynthesis of agmatine from arginine. This chain is Biosynthetic arginine decarboxylase, found in Parasynechococcus marenigrum (strain WH8102).